The following is a 228-amino-acid chain: uncharacterized protein (228 aa).

Residues 5-119 (HILIVEDEEK…ELLARIRAAL (115 aa)) enclose the Response regulatory domain. Position 54 is a 4-aspartylphosphate (Asp54). A DNA-binding region (ompR/PhoB-type) is located at residues 130-228 (GTFLTYDDLR…IRGVGYAIKG (99 aa)).

Post-translationally, phosphorylated by YkoH.

The protein resides in the cytoplasm. In terms of biological role, probable member of the two-component regulatory system YkoH/YkoG. This is an uncharacterized protein from Bacillus subtilis (strain 168).